We begin with the raw amino-acid sequence, 466 residues long: Arginine biosynthesis bifunctional protein ArgJ, mitochondrial (466 aa).

Residues Thr194, Lys223, Thr234, Glu321, Asn461, and Thr466 each coordinate substrate. Catalysis depends on Thr234, which acts as the Nucleophile.

Belongs to the ArgJ family. In terms of assembly, heterodimer of an alpha and a beta chain. Post-translationally, the alpha and beta chains are autoproteolytically processed from a single precursor protein within the mitochondrion.

The protein localises to the mitochondrion matrix. It carries out the reaction N(2)-acetyl-L-ornithine + L-glutamate = N-acetyl-L-glutamate + L-ornithine. The catalysed reaction is L-glutamate + acetyl-CoA = N-acetyl-L-glutamate + CoA + H(+). It functions in the pathway amino-acid biosynthesis; L-arginine biosynthesis; L-ornithine and N-acetyl-L-glutamate from L-glutamate and N(2)-acetyl-L-ornithine (cyclic): step 1/1. Its pathway is amino-acid biosynthesis; L-arginine biosynthesis; N(2)-acetyl-L-ornithine from L-glutamate: step 1/4. In terms of biological role, catalyzes two activities which are involved in the cyclic version of arginine biosynthesis: the synthesis of acetylglutamate from glutamate and acetyl-CoA, and of ornithine by transacetylation between acetylornithine and glutamate. The sequence is that of Arginine biosynthesis bifunctional protein ArgJ, mitochondrial from Aspergillus fumigatus (strain ATCC MYA-4609 / CBS 101355 / FGSC A1100 / Af293) (Neosartorya fumigata).